Here is a 432-residue protein sequence, read N- to C-terminus: Ribosomal protein uS12 methylthiotransferase RimO (432 aa).

The 112-residue stretch at Met-1–Lys-112 folds into the MTTase N-terminal domain. The [4Fe-4S] cluster site is built by Cys-10, Cys-46, Cys-75, Cys-134, Cys-138, and Cys-141. Residues Ser-120–Lys-350 enclose the Radical SAM core domain. Residues Glu-353–Glu-422 enclose the TRAM domain.

It belongs to the methylthiotransferase family. RimO subfamily. Requires [4Fe-4S] cluster as cofactor.

It is found in the cytoplasm. The catalysed reaction is L-aspartate(89)-[ribosomal protein uS12]-hydrogen + (sulfur carrier)-SH + AH2 + 2 S-adenosyl-L-methionine = 3-methylsulfanyl-L-aspartate(89)-[ribosomal protein uS12]-hydrogen + (sulfur carrier)-H + 5'-deoxyadenosine + L-methionine + A + S-adenosyl-L-homocysteine + 2 H(+). Functionally, catalyzes the methylthiolation of an aspartic acid residue of ribosomal protein uS12. The polypeptide is Ribosomal protein uS12 methylthiotransferase RimO (Aquifex aeolicus (strain VF5)).